Consider the following 115-residue polypeptide: Small ribosomal subunit protein bS16 (115 aa).

A disordered region spans residues 81–115 (GLAPKPTYNEQPKKSAPKAKAQERAKAAADAAAAA).

This sequence belongs to the bacterial ribosomal protein bS16 family.

This Gluconobacter oxydans (strain 621H) (Gluconobacter suboxydans) protein is Small ribosomal subunit protein bS16.